The primary structure comprises 166 residues: 2-C-methyl-D-erythritol 2,4-cyclodiphosphate synthase (166 aa).

Residues D15 and H17 each coordinate a divalent metal cation. 4-CDP-2-C-methyl-D-erythritol 2-phosphate-binding positions include 15–17 (DIH) and 43–44 (HS). H51 contacts a divalent metal cation. 4-CDP-2-C-methyl-D-erythritol 2-phosphate is bound by residues 65–67 (DIG), 141–144 (TTNE), and R151.

This sequence belongs to the IspF family. In terms of assembly, homotrimer. It depends on a divalent metal cation as a cofactor.

It catalyses the reaction 4-CDP-2-C-methyl-D-erythritol 2-phosphate = 2-C-methyl-D-erythritol 2,4-cyclic diphosphate + CMP. It functions in the pathway isoprenoid biosynthesis; isopentenyl diphosphate biosynthesis via DXP pathway; isopentenyl diphosphate from 1-deoxy-D-xylulose 5-phosphate: step 4/6. Its function is as follows. Involved in the biosynthesis of isopentenyl diphosphate (IPP) and dimethylallyl diphosphate (DMAPP), two major building blocks of isoprenoid compounds. Catalyzes the conversion of 4-diphosphocytidyl-2-C-methyl-D-erythritol 2-phosphate (CDP-ME2P) to 2-C-methyl-D-erythritol 2,4-cyclodiphosphate (ME-CPP) with a corresponding release of cytidine 5-monophosphate (CMP). This is 2-C-methyl-D-erythritol 2,4-cyclodiphosphate synthase from Prochlorococcus marinus (strain MIT 9215).